Consider the following 165-residue polypeptide: MPPKFDPNEVKTIFMRAVGGEVAGGSTLAPKIGPLGLSPKKVGEDIAKATKDWKGLRVTVKLTIQNRQAAVSVVPSASALVIKALKEPARDRKKDKNVAHSGNVSLDEIIEVARTMRFKSLAKELSGTVKEILGTAFSVGCTVDGKNPHDVQKEIDNGEIEIPQE.

The residue at position 67 (Arg-67) is an N5-methylarginine.

The protein belongs to the universal ribosomal protein uL11 family. In terms of assembly, component of the large ribosomal subunit (LSU). Mature yeast ribosomes consist of a small (40S) and a large (60S) subunit. The 40S small subunit contains 1 molecule of ribosomal RNA (18S rRNA) and at least 33 different proteins. The large 60S subunit contains 3 rRNA molecules (25S, 5.8S and 5S rRNA) and at least 46 different proteins.

The protein localises to the cytoplasm. Its subcellular location is the nucleus. The protein resides in the nucleolus. This protein binds directly to 26S ribosomal RNA. In terms of biological role, component of the ribosome, a large ribonucleoprotein complex responsible for the synthesis of proteins in the cell. The small ribosomal subunit (SSU) binds messenger RNAs (mRNAs) and translates the encoded message by selecting cognate aminoacyl-transfer RNA (tRNA) molecules. The large subunit (LSU) contains the ribosomal catalytic site termed the peptidyl transferase center (PTC), which catalyzes the formation of peptide bonds, thereby polymerizing the amino acids delivered by tRNAs into a polypeptide chain. The nascent polypeptides leave the ribosome through a tunnel in the LSU and interact with protein factors that function in enzymatic processing, targeting, and the membrane insertion of nascent chains at the exit of the ribosomal tunnel. In Schizosaccharomyces pombe (strain 972 / ATCC 24843) (Fission yeast), this protein is Large ribosomal subunit protein uL11A (rpl1201).